The sequence spans 311 residues: Vomeronasal type-1 receptor 3 (311 aa).

Residues 1–5 (MASKD) lie on the Extracellular side of the membrane. A helical membrane pass occupies residues 6-26 (FAIGMILLSQIMVGFLGNFFL). Topologically, residues 27 to 51 (LYHYSFLCFTRGMLQSTDLILKHLT) are cytoplasmic. Residues 52 to 72 (IANSLVILSKGIPQTMAAFGL) traverse the membrane as a helical segment. Topologically, residues 73–92 (KDSLSDIGCKFVFYVHRVGR) are extracellular. The helical transmembrane segment at 93–113 (AVCVGNACLLSVFQVITISPS) threads the bilayer. Residues 114–130 (EFRWAELKLHAHKYIRS) are Cytoplasmic-facing. A helical membrane pass occupies residues 131–151 (FILVLCWILNTLVNITVLLHV). Topologically, residues 152 to 187 (TGKWNSINSTKTNDYGYCSGGSRSRIPHSLHIVLLS) are extracellular. Asn159 is a glycosylation site (N-linked (GlcNAc...) asparagine). Residues 188–208 (SLDVLCLGLMTLASGSMVFIL) form a helical membrane-spanning segment. The Cytoplasmic segment spans residues 209–232 (HRHKQQVQHIHGTNLSARSSPESR). A helical membrane pass occupies residues 233 to 249 (VTQSILVLVSTLCYFTR). Residues 250–264 (SPPSLHMSLFPNPSW) are Extracellular-facing. A helical membrane pass occupies residues 265–285 (WLLNTSALITACFPMVSPFVL). The Cytoplasmic portion of the chain corresponds to 286-311 (MSRHPRIPRLGSACCGRNPQFPKLVR).

The protein belongs to the G-protein coupled receptor 1 family.

It localises to the cell membrane. In terms of biological role, putative pheromone receptor. This Homo sapiens (Human) protein is Vomeronasal type-1 receptor 3 (VN1R3).